The primary structure comprises 117 residues: Acrylate reductase cytochrome subunit (117 aa).

The first 22 residues, 1–22, serve as a signal peptide directing secretion; that stretch reads MKMYKLMLGLVLAGLVSLSAQA. Residues histidine 29, cysteine 37, cysteine 40, histidine 41, cysteine 54, cysteine 57, histidine 58, histidine 79, histidine 83, cysteine 90, cysteine 93, histidine 94, histidine 97, cysteine 104, cysteine 107, and histidine 108 each coordinate heme c.

As to quaternary structure, the ArdAB flavocytochrome c is composed of a FAD-containing subunit (ArdA) and a heme c-containing subunit (ArdB). Heme c serves as cofactor.

It is found in the periplasm. With respect to regulation, methacrylate acts as a competitive inhibitor of the acrylate reductase activity and suppresses the reductase activity in dose-dependent manner. Heme c-containing subunit of the ArdAB flavocytochrome c, which catalyzes the reduction of acrylate to propanoate and supports dimethylsulfoniopropionate-dependent anaerobic respiration. In vitro, can use the artificial electron donor methyl viologen. The natural electron donor is probably a low-potential cytochrome c. Also shows weak activity toward methacrylate in vitro (at a 22-fold lower rate) but cannot use other tested 2-enoates, including crotonic, fumaric, sorbic, urocanic, cinnamic, p-coumaric, caffeic or ferulic acids. The protein catalyzes a unidirectional reaction and cannot oxidize propanoate with phenazine metasulfate and dichlorophenolindophenol as electron acceptors. This chain is Acrylate reductase cytochrome subunit, found in Shewanella woodyi (strain ATCC 51908 / MS32).